Here is a 224-residue protein sequence, read N- to C-terminus: Small ribosomal subunit protein uS3 (224 aa).

The KH type-2 domain maps to 39 to 107; it reads IREFLKKKPS…DVWVEIAEVK (69 aa).

This sequence belongs to the universal ribosomal protein uS3 family. In terms of assembly, part of the 30S ribosomal subunit. Forms a tight complex with proteins S10 and S14.

Its function is as follows. Binds the lower part of the 30S subunit head. Binds mRNA in the 70S ribosome, positioning it for translation. The sequence is that of Small ribosomal subunit protein uS3 from Chlamydia trachomatis serovar A (strain ATCC VR-571B / DSM 19440 / HAR-13).